Consider the following 265-residue polypeptide: Undecaprenyl-diphosphatase (265 aa).

7 helical membrane passes run 38 to 58 (SDMF…IIYW), 80 to 100 (LIVA…LGFE), 107 to 127 (PIAW…WAAA), 135 to 155 (ITWL…VFPG), 175 to 195 (AAAT…ASGY), 213 to 233 (ALAI…KWLL), and 244 to 264 (FAIY…SGLI).

Belongs to the UppP family.

Its subcellular location is the cell inner membrane. The enzyme catalyses di-trans,octa-cis-undecaprenyl diphosphate + H2O = di-trans,octa-cis-undecaprenyl phosphate + phosphate + H(+). Its function is as follows. Catalyzes the dephosphorylation of undecaprenyl diphosphate (UPP). Confers resistance to bacitracin. This Rhizobium etli (strain CIAT 652) protein is Undecaprenyl-diphosphatase.